A 434-amino-acid chain; its full sequence is Transcriptional enhancer factor TEF-3 (434 aa).

A compositionally biased stretch (polar residues) spans 1-28 (MEGTAGTITSNEWSSPTSPEGSTASGGS). Disordered stretches follow at residues 1–42 (MEGT…AEGV) and 188–215 (QPPL…PPWQ). The segment at residues 36–112 (DNDAEGVWSP…QVLARRKARE (77 aa)) is a DNA-binding region (TEA). Residues 201–213 (GPAPSPSAPPAPP) are compositionally biased toward pro residues.

Interacts with YAP1 and WWTR1/TAZ. As to expression, preferentially expressed in skeletal muscle. Lower levels in pancreas, placenta, and heart.

It is found in the nucleus. Its function is as follows. Transcription factor which plays a key role in the Hippo signaling pathway, a pathway involved in organ size control and tumor suppression by restricting proliferation and promoting apoptosis. The core of this pathway is composed of a kinase cascade wherein MST1/MST2, in complex with its regulatory protein SAV1, phosphorylates and activates LATS1/2 in complex with its regulatory protein MOB1, which in turn phosphorylates and inactivates YAP1 oncoprotein and WWTR1/TAZ. Acts by mediating gene expression of YAP1 and WWTR1/TAZ, thereby regulating cell proliferation, migration and epithelial mesenchymal transition (EMT) induction. Binds specifically and non-cooperatively to the Sph and GT-IIC 'enhansons' (5'-GTGGAATGT-3') and activates transcription. Binds to the M-CAT motif. The protein is Transcriptional enhancer factor TEF-3 (TEAD4) of Homo sapiens (Human).